The chain runs to 478 residues: 3-isopropylmalate dehydratase large subunit (478 aa).

[4Fe-4S] cluster contacts are provided by Cys-355, Cys-415, and Cys-418.

Belongs to the aconitase/IPM isomerase family. LeuC type 1 subfamily. As to quaternary structure, heterodimer of LeuC and LeuD. The cofactor is [4Fe-4S] cluster.

The enzyme catalyses (2R,3S)-3-isopropylmalate = (2S)-2-isopropylmalate. It functions in the pathway amino-acid biosynthesis; L-leucine biosynthesis; L-leucine from 3-methyl-2-oxobutanoate: step 2/4. Catalyzes the isomerization between 2-isopropylmalate and 3-isopropylmalate, via the formation of 2-isopropylmaleate. In Paracoccus denitrificans (strain Pd 1222), this protein is 3-isopropylmalate dehydratase large subunit.